The primary structure comprises 162 residues: Cyclic pyranopterin monophosphate synthase (162 aa).

Substrate-binding positions include 75–77 and 115–116; these read MCH and ME. Residue Asp-130 is part of the active site.

This sequence belongs to the MoaC family. As to quaternary structure, homohexamer; trimer of dimers.

It catalyses the reaction (8S)-3',8-cyclo-7,8-dihydroguanosine 5'-triphosphate = cyclic pyranopterin phosphate + diphosphate. It participates in cofactor biosynthesis; molybdopterin biosynthesis. Its function is as follows. Catalyzes the conversion of (8S)-3',8-cyclo-7,8-dihydroguanosine 5'-triphosphate to cyclic pyranopterin monophosphate (cPMP). The polypeptide is Cyclic pyranopterin monophosphate synthase (Geobacillus thermodenitrificans (strain NG80-2)).